The sequence spans 128 residues: Large ribosomal subunit protein bL20c (128 aa).

The protein belongs to the bacterial ribosomal protein bL20 family. In terms of assembly, component of the chloroplast large ribosomal subunit (LSU). Mature 70S chloroplast ribosomes of higher plants consist of a small (30S) and a large (50S) subunit. The 30S small subunit contains 1 molecule of ribosomal RNA (16S rRNA) and 24 different proteins. The 50S large subunit contains 3 rRNA molecules (23S, 5S and 4.5S rRNA) and 33 different proteins.

Its subcellular location is the plastid. It localises to the chloroplast. Component of the chloroplast ribosome (chloro-ribosome), a dedicated translation machinery responsible for the synthesis of chloroplast genome-encoded proteins, including proteins of the transcription and translation machinery and components of the photosynthetic apparatus. The sequence is that of Large ribosomal subunit protein bL20c (rpl20) from Spinacia oleracea (Spinach).